The primary structure comprises 791 residues: Probable phosphoketolase (791 aa).

This sequence belongs to the XFP family. The cofactor is thiamine diphosphate.

The chain is Probable phosphoketolase from Chlorobaculum tepidum (strain ATCC 49652 / DSM 12025 / NBRC 103806 / TLS) (Chlorobium tepidum).